Reading from the N-terminus, the 257-residue chain is uncharacterized protein (257 aa).

The segment covering 74–83 (LKDDLTRDNS) has biased composition (basic and acidic residues). Disordered regions lie at residues 74-115 (LKDD…TQKR) and 209-257 (PYLN…YDSF). Positions 100–113 (SFQNMNSSMPSSTQ) are enriched in polar residues. Positions 216–236 (SEDDTDSSIVEVETDYSEEEK) are enriched in acidic residues.

Belongs to the asfivirus DP238L family.

This is an uncharacterized protein from Ornithodoros (relapsing fever ticks).